The primary structure comprises 225 residues: GTP cyclohydrolase III (225 aa).

This sequence belongs to the archaeal-type GTP cyclohydrolase family.

It carries out the reaction GTP + 3 H2O = 2-amino-5-formylamino-6-(5-phospho-D-ribosylamino)pyrimidin-4(3H)-one + 2 phosphate + 2 H(+). In terms of biological role, catalyzes the formation of 2-amino-5-formylamino-6-ribofuranosylamino-4(3H)-pyrimidinone ribonucleotide monophosphate and inorganic phosphate from GTP. Also has an independent pyrophosphate phosphohydrolase activity. This is GTP cyclohydrolase III from Sulfurisphaera tokodaii (strain DSM 16993 / JCM 10545 / NBRC 100140 / 7) (Sulfolobus tokodaii).